The following is a 443-amino-acid chain: MSEMTPREIVHELDRHIIGQAEAKRAVAIALRNRWRRMQLSNELRQEVAPKNILMIGPTGVGKTEIARRLAKLANAPFIKVEATKFTEVGYVGKEVDTIIRDLTDMALKMMREQEMEKVRFRAHEAAEERVLDVLLPPARSNWGEAEKSETGTHTRQIFRKKLREGELDDKEIEIDVAAPQMGVEIMAPPGMEEMTNQLQGLFQNMSAGNTHKRKLKVKDALKQLVEEEAGRLLNPEELKEKTIHAVENNGIVFIDEFDKICKRGESSGPDVSREGVQRDLLPLIEGCTVNTKHGMVRTDHILFIASGAFQIAKPSDLIPELQGRLPIRVELKNLTVDDFERILTEPNASLTEQYQALMATEQVKIEFTAEGIRSIAEAAWQVNERTENIGARRLHTVLEKLMEDISYDAADNAGQLFSIDAEYVNRYLGALIEDEDLSRFIL.

ATP contacts are provided by residues Ile-18, 60-65, Asp-256, Glu-321, and Arg-393; that span reads GVGKTE.

It belongs to the ClpX chaperone family. HslU subfamily. A double ring-shaped homohexamer of HslV is capped on each side by a ring-shaped HslU homohexamer. The assembly of the HslU/HslV complex is dependent on binding of ATP.

The protein localises to the cytoplasm. ATPase subunit of a proteasome-like degradation complex; this subunit has chaperone activity. The binding of ATP and its subsequent hydrolysis by HslU are essential for unfolding of protein substrates subsequently hydrolyzed by HslV. HslU recognizes the N-terminal part of its protein substrates and unfolds these before they are guided to HslV for hydrolysis. The sequence is that of ATP-dependent protease ATPase subunit HslU from Tolumonas auensis (strain DSM 9187 / NBRC 110442 / TA 4).